The primary structure comprises 405 residues: Tryptophan synthase beta chain (405 aa).

An N6-(pyridoxal phosphate)lysine modification is found at lysine 96.

This sequence belongs to the TrpB family. In terms of assembly, tetramer of two alpha and two beta chains. Requires pyridoxal 5'-phosphate as cofactor.

The enzyme catalyses (1S,2R)-1-C-(indol-3-yl)glycerol 3-phosphate + L-serine = D-glyceraldehyde 3-phosphate + L-tryptophan + H2O. Its pathway is amino-acid biosynthesis; L-tryptophan biosynthesis; L-tryptophan from chorismate: step 5/5. Its function is as follows. The beta subunit is responsible for the synthesis of L-tryptophan from indole and L-serine. This is Tryptophan synthase beta chain from Clostridium botulinum (strain Alaska E43 / Type E3).